Consider the following 244-residue polypeptide: 15,16-dihydrobiliverdin:ferredoxin oxidoreductase (244 aa).

Belongs to the HY2 family.

It catalyses the reaction 15,16-dihydrobiliverdin + oxidized 2[4Fe-4S]-[ferredoxin] = biliverdin IXalpha + reduced 2[4Fe-4S]-[ferredoxin] + 2 H(+). In terms of biological role, catalyzes the two-electron reduction of biliverdin IX-alpha at the C15 methine bridge. In Nostoc punctiforme (strain ATCC 29133 / PCC 73102), this protein is 15,16-dihydrobiliverdin:ferredoxin oxidoreductase (pebA).